The chain runs to 125 residues: Holo-[acyl-carrier-protein] synthase (125 aa).

Mg(2+) contacts are provided by Asp8 and Glu57.

This sequence belongs to the P-Pant transferase superfamily. AcpS family. Requires Mg(2+) as cofactor.

The protein localises to the cytoplasm. The catalysed reaction is apo-[ACP] + CoA = holo-[ACP] + adenosine 3',5'-bisphosphate + H(+). Its function is as follows. Transfers the 4'-phosphopantetheine moiety from coenzyme A to a Ser of acyl-carrier-protein. In Dechloromonas aromatica (strain RCB), this protein is Holo-[acyl-carrier-protein] synthase.